Reading from the N-terminus, the 154-residue chain is 6,7-dimethyl-8-ribityllumazine synthase (154 aa).

5-amino-6-(D-ribitylamino)uracil-binding positions include Phe22, 56–58, and 80–82; these read AFE and AVI. 85–86 is a binding site for (2S)-2-hydroxy-3-oxobutyl phosphate; the sequence is AT. His88 acts as the Proton donor in catalysis. Residue Phe113 coordinates 5-amino-6-(D-ribitylamino)uracil. Residue Arg127 coordinates (2S)-2-hydroxy-3-oxobutyl phosphate.

Belongs to the DMRL synthase family.

It catalyses the reaction (2S)-2-hydroxy-3-oxobutyl phosphate + 5-amino-6-(D-ribitylamino)uracil = 6,7-dimethyl-8-(1-D-ribityl)lumazine + phosphate + 2 H2O + H(+). It participates in cofactor biosynthesis; riboflavin biosynthesis; riboflavin from 2-hydroxy-3-oxobutyl phosphate and 5-amino-6-(D-ribitylamino)uracil: step 1/2. In terms of biological role, catalyzes the formation of 6,7-dimethyl-8-ribityllumazine by condensation of 5-amino-6-(D-ribitylamino)uracil with 3,4-dihydroxy-2-butanone 4-phosphate. This is the penultimate step in the biosynthesis of riboflavin. In Syntrophobacter fumaroxidans (strain DSM 10017 / MPOB), this protein is 6,7-dimethyl-8-ribityllumazine synthase.